A 219-amino-acid polypeptide reads, in one-letter code: Cytidylate kinase (219 aa).

21–29 lines the ATP pocket; it reads GPAASGKGT.

The protein belongs to the cytidylate kinase family. Type 1 subfamily.

The protein resides in the cytoplasm. It catalyses the reaction CMP + ATP = CDP + ADP. The catalysed reaction is dCMP + ATP = dCDP + ADP. In Rickettsia conorii (strain ATCC VR-613 / Malish 7), this protein is Cytidylate kinase.